The chain runs to 120 residues: NAD(P)H-quinone oxidoreductase subunit 3, chloroplastic (120 aa).

A run of 3 helical transmembrane segments spans residues 9-29, 64-84, and 88-108; these read IFWAFLMISSVIPILAFLISG, MFALVFVVFDVETVFLYPWAM, and VLGVSVFIEALIFVLIPIVGS.

It belongs to the complex I subunit 3 family. As to quaternary structure, NDH is composed of at least 16 different subunits, 5 of which are encoded in the nucleus.

Its subcellular location is the plastid. The protein localises to the chloroplast thylakoid membrane. The catalysed reaction is a plastoquinone + NADH + (n+1) H(+)(in) = a plastoquinol + NAD(+) + n H(+)(out). It carries out the reaction a plastoquinone + NADPH + (n+1) H(+)(in) = a plastoquinol + NADP(+) + n H(+)(out). NDH shuttles electrons from NAD(P)H:plastoquinone, via FMN and iron-sulfur (Fe-S) centers, to quinones in the photosynthetic chain and possibly in a chloroplast respiratory chain. The immediate electron acceptor for the enzyme in this species is believed to be plastoquinone. Couples the redox reaction to proton translocation, and thus conserves the redox energy in a proton gradient. This is NAD(P)H-quinone oxidoreductase subunit 3, chloroplastic from Amborella trichopoda.